We begin with the raw amino-acid sequence, 257 residues long: GTP cyclohydrolase 1 type 2 homolog (257 aa).

Histidine 65, aspartate 103, histidine 221, and glutamate 224 together coordinate a divalent metal cation.

It belongs to the GTP cyclohydrolase I type 2/NIF3 family. As to quaternary structure, homohexamer.

The chain is GTP cyclohydrolase 1 type 2 homolog (ykiD) from Lactococcus lactis subsp. lactis (strain IL1403) (Streptococcus lactis).